The following is a 243-amino-acid chain: Pyridoxine 5'-phosphate synthase (243 aa).

N6 contributes to the 3-amino-2-oxopropyl phosphate binding site. 8–9 (DH) provides a ligand contact to 1-deoxy-D-xylulose 5-phosphate. R17 lines the 3-amino-2-oxopropyl phosphate pocket. The active-site Proton acceptor is H42. The 1-deoxy-D-xylulose 5-phosphate site is built by R44 and H49. E72 acts as the Proton acceptor in catalysis. A 1-deoxy-D-xylulose 5-phosphate-binding site is contributed by T102. The active-site Proton donor is the H192. Residues G193 and 214–215 (GH) each bind 3-amino-2-oxopropyl phosphate.

It belongs to the PNP synthase family. As to quaternary structure, homooctamer; tetramer of dimers.

It localises to the cytoplasm. It catalyses the reaction 3-amino-2-oxopropyl phosphate + 1-deoxy-D-xylulose 5-phosphate = pyridoxine 5'-phosphate + phosphate + 2 H2O + H(+). It participates in cofactor biosynthesis; pyridoxine 5'-phosphate biosynthesis; pyridoxine 5'-phosphate from D-erythrose 4-phosphate: step 5/5. Functionally, catalyzes the complicated ring closure reaction between the two acyclic compounds 1-deoxy-D-xylulose-5-phosphate (DXP) and 3-amino-2-oxopropyl phosphate (1-amino-acetone-3-phosphate or AAP) to form pyridoxine 5'-phosphate (PNP) and inorganic phosphate. The chain is Pyridoxine 5'-phosphate synthase from Sulfurihydrogenibium sp. (strain YO3AOP1).